Reading from the N-terminus, the 490-residue chain is Serine/threonine-protein kinase PBL35 (490 aa).

Disordered regions lie at residues 1 to 39 (MGFD…RNSE) and 80 to 103 (SAIV…SNAE). The stretch at 14–39 (SKTSNENEKKKKKRRRKKNNNVRNSE) forms a coiled coil. Residues 23–33 (KKKKRRRKKNN) show a composition bias toward basic residues. Over residues 94–103 (SSTTTTSNAE) the composition is skewed to low complexity. Residues 136–422 (FRPESLLGEG…VEVLKPLPHL (287 aa)) form the Protein kinase domain. Residues 142–150 (LGEGGFGCV) and Lys-174 contribute to the ATP site. A Phosphotyrosine modification is found at Tyr-219. The Proton acceptor role is filled by Asp-269. Residues Ser-273 and Ser-303 each carry the phosphoserine modification. Phosphothreonine occurs at positions 304 and 309. Tyr-317 bears the Phosphotyrosine mark. Residues 442 to 490 (AGSGSGSGRGFGSRNGQPVFRTLSSPHGQAGSSPYRHQIPSPKPKGATT) are disordered. Residues 444 to 454 (SGSGSGRGFGS) show a composition bias toward gly residues. Positions 463–473 (TLSSPHGQAGS) are enriched in polar residues.

Belongs to the protein kinase superfamily. Ser/Thr protein kinase family. As to quaternary structure, interacts with SD129. Post-translationally, phosphorylated by SD129 in response to the pathogen-associated molecular pattern (PAMP) 3-OH-C10:0, a medium-chain 3-hydroxy fatty acid.

The protein resides in the cell membrane. The catalysed reaction is L-seryl-[protein] + ATP = O-phospho-L-seryl-[protein] + ADP + H(+). It carries out the reaction L-threonyl-[protein] + ATP = O-phospho-L-threonyl-[protein] + ADP + H(+). Its function is as follows. Involved in chitin-triggered immune signaling and is required for reactive oxygen species (ROS) production. Acts downstream of SD129 in defense signaling triggered by the pathogen-associated molecular pattern (PAMP) 3-OH-C10:0, a medium-chain 3-hydroxy fatty acid. In Arabidopsis thaliana (Mouse-ear cress), this protein is Serine/threonine-protein kinase PBL35.